Reading from the N-terminus, the 587-residue chain is Kelch-like protein 3 (587 aa).

Serine 10 carries the post-translational modification Phosphoserine. The 68-residue stretch at 50-117 (CDVMIVAEDV…IYTAEIEVTE (68 aa)) folds into the BTB domain. Positions 152-254 (CLGIRAFADV…PRDYLVQTVE (103 aa)) constitute a BACK domain. Threonine 295 is subject to Phosphothreonine. Kelch repeat units lie at residues 302–347 (VMIV…FMAG), 348–394 (HVYA…VLND), 396–441 (LYAV…VVEG), 442–490 (KLYA…VLSG), 491–537 (QLYA…AVNG), and 539–585 (LYVV…VIHK). Phosphothreonine is present on threonine 375. Residue serine 376 is modified to Phosphoserine. A Phosphoserine; by PKA and PKC modification is found at serine 433.

This sequence belongs to the KLHL3 family. As to quaternary structure, homodimer. Component of the BCR(KLHL3) E3 ubiquitin ligase complex, at least composed of CUL3 and KLHL3 and RBX1. Interacts with CLDN8. Phosphorylation at Ser-433 by PKA or PKC decreases the interaction with WNK1 and WNK4, leading to inhibit their degradation by the BCR(KLHL3) complex. Phosphorylated at Ser-433 by PKC in response to angiotensin II signaling, decreasing ability to promote degradation of WNK1 and WNK4, leading to activation of Na-Cl cotransporter SLC12A3/NCC. Phosphorylation at Ser-433 is increased by insulin. Dephosphorylated at Ser-433 by calcineurin PPP3CA, promoting degradation of WNK1 and WNK4. Widely expressed.

Its subcellular location is the cytoplasm. It is found in the cytosol. The protein resides in the cytoskeleton. It functions in the pathway protein modification; protein ubiquitination. Its function is as follows. Substrate-specific adapter of a BCR (BTB-CUL3-RBX1) E3 ubiquitin ligase complex that acts as a regulator of ion transport in the distal nephron. The BCR(KLHL3) complex acts by mediating ubiquitination and degradation of WNK1 and WNK4, two activators of Na-Cl cotransporter SLC12A3/NCC in distal convoluted tubule cells of kidney, thereby regulating NaCl reabsorption. The BCR(KLHL3) complex also mediates ubiquitination and degradation of WNK3. The BCR(KLHL3) complex also mediates ubiquitination of CLDN8, a tight-junction protein required for paracellular chloride transport in the kidney, leading to its degradation. The polypeptide is Kelch-like protein 3 (Homo sapiens (Human)).